A 621-amino-acid polypeptide reads, in one-letter code: DNA mismatch repair protein MutL (621 aa).

It belongs to the DNA mismatch repair MutL/HexB family.

This protein is involved in the repair of mismatches in DNA. It is required for dam-dependent methyl-directed DNA mismatch repair. May act as a 'molecular matchmaker', a protein that promotes the formation of a stable complex between two or more DNA-binding proteins in an ATP-dependent manner without itself being part of a final effector complex. The protein is DNA mismatch repair protein MutL of Xylella fastidiosa (strain M12).